The primary structure comprises 206 residues: Macrophage immunometabolism regulator (206 aa).

Belongs to the UNC119-binding protein family. As to quaternary structure, interacts with unc119 family proteins; interaction preferentially takes place when unc119 proteins are unliganded with myristoylated proteins.

It is found in the cytoplasm. It localises to the cell projection. Its subcellular location is the cilium. Functionally, may play a role in immune regulation through regulation of the macrophage function. Involved in the recruitment of macrophages in response to injury. May also play a role in trafficking of proteins via its interaction with unc119 family cargo adapters. May play a role in ciliary membrane localization. Its function is as follows. Regulates the macrophage function, by enhancing the resolution of inflammation and wound repair functions mediated by M2 macrophages. The regulation of macrophage function is, due at least in part, to the role of C5orf30 in regulating ability to inhibit glycolysis. Probably plays alaso a role in trafficking of proteins via its interaction with UNC119 and UNC119B cargo adapters: may help the release of UNC119 and UNC119B cargo or the recycling of UNC119 and UNC119B. May play a role in ciliary membrane localization via its interaction with UNC119B and protein transport into photoreceptor cells. This Danio rerio (Zebrafish) protein is Macrophage immunometabolism regulator (macir).